A 37-amino-acid chain; its full sequence is Large ribosomal subunit protein bL36c (37 aa).

The protein belongs to the bacterial ribosomal protein bL36 family.

It localises to the plastid. The polypeptide is Large ribosomal subunit protein bL36c (Aneura mirabilis (Parasitic liverwort)).